The chain runs to 91 residues: MNLIIWPTYLDSRKSRSEGRRVPLEYAVESPTASEILRAARKLQLEASMESDRAYPPSWWESSGRVVVEYNGKKSELLPKIARLVRSSRKR.

The protein belongs to the SRP19 family. In terms of assembly, part of the signal recognition particle protein translocation system, which is composed of SRP and FtsY. Archaeal SRP consists of a 7S RNA molecule of 300 nucleotides and two protein subunits: SRP54 and SRP19.

Its subcellular location is the cytoplasm. Functionally, involved in targeting and insertion of nascent membrane proteins into the cytoplasmic membrane. Binds directly to 7S RNA and mediates binding of the 54 kDa subunit of the SRP. This is Signal recognition particle 19 kDa protein from Methanothermobacter thermautotrophicus (strain ATCC 29096 / DSM 1053 / JCM 10044 / NBRC 100330 / Delta H) (Methanobacterium thermoautotrophicum).